The chain runs to 152 residues: MFRGATMVNLDSKGRLAVPTRYRESLNEESQGQMVCTIDLHQPCLLLYPLPEWEIIEQKLSRLSSMNPAERRVQRLLLGHASECQMDGAGRLLIAGTLRQHAGLNKEVMLVGQFNKFELWDEQTWYQQVKDDIDAEQSTQEPLSERLQDLSL.

SpoVT-AbrB domains lie at 5–52 (ATMV…PLPE) and 81–124 (ASEC…DEQT).

The protein belongs to the MraZ family. In terms of assembly, forms oligomers.

Its subcellular location is the cytoplasm. The protein resides in the nucleoid. In terms of biological role, negatively regulates its own expression and that of the subsequent genes in the proximal part of the division and cell wall (dcw) gene cluster. Acts by binding directly to DNA. May also regulate the expression of genes outside the dcw cluster. This Yersinia pseudotuberculosis serotype O:1b (strain IP 31758) protein is Transcriptional regulator MraZ.